Consider the following 360-residue polypeptide: Peptide chain release factor 1 (360 aa).

Gln-235 carries the post-translational modification N5-methylglutamine. Over residues 291–308 (ASERRNLLGTGDRSDRNR) the composition is skewed to basic and acidic residues. Residues 291–312 (ASERRNLLGTGDRSDRNRTYNF) are disordered.

This sequence belongs to the prokaryotic/mitochondrial release factor family. Methylated by PrmC. Methylation increases the termination efficiency of RF1.

It localises to the cytoplasm. Functionally, peptide chain release factor 1 directs the termination of translation in response to the peptide chain termination codons UAG and UAA. The protein is Peptide chain release factor 1 of Yersinia pseudotuberculosis serotype I (strain IP32953).